Consider the following 310-residue polypeptide: Protoheme IX farnesyltransferase 2 (310 aa).

A run of 9 helical transmembrane segments spans residues 25–45, 49–69, 98–118, 121–141, 145–165, 176–196, 222–242, 245–265, and 277–297; these read PGIIFGNLISVAGGFLLAAKG, LVLMLASLVGLSLVVASGCAI, HVLLFGIAIGVLGFGILALFT, LALLFAAIGYVVYVGIYSLYM, SVYGTLVGSFSGAVPPVVGYC, VILLLMFSLWQMPHSYAIAIF, IVLYIAVFALVSTMLPLAGYT, AFMAVTCATSLWWLTMALKGY, and QVFGFSIITITALSVTMALDF.

Belongs to the UbiA prenyltransferase family. Protoheme IX farnesyltransferase subfamily.

Its subcellular location is the cell inner membrane. The catalysed reaction is heme b + (2E,6E)-farnesyl diphosphate + H2O = Fe(II)-heme o + diphosphate. Its pathway is porphyrin-containing compound metabolism; heme O biosynthesis; heme O from protoheme: step 1/1. Functionally, converts heme B (protoheme IX) to heme O by substitution of the vinyl group on carbon 2 of heme B porphyrin ring with a hydroxyethyl farnesyl side group. The polypeptide is Protoheme IX farnesyltransferase 2 (Shewanella sp. (strain MR-7)).